We begin with the raw amino-acid sequence, 199 residues long: Recombination protein RecR (199 aa).

The C4-type zinc finger occupies C58–C73. The Toprim domain maps to G81–P176.

This sequence belongs to the RecR family.

May play a role in DNA repair. It seems to be involved in an RecBC-independent recombinational process of DNA repair. It may act with RecF and RecO. This chain is Recombination protein RecR, found in Cereibacter sphaeroides (strain ATCC 17029 / ATH 2.4.9) (Rhodobacter sphaeroides).